The following is a 149-amino-acid chain: UPF0756 membrane protein Nther_1957 (149 aa).

4 consecutive transmembrane segments (helical) span residues 5–25 (IVVL…LVAT), 52–72 (LGIL…DIMP), 85–105 (LIAV…VELL), and 111–131 (VMVG…GVPA).

It belongs to the UPF0756 family.

The protein resides in the cell membrane. In Natranaerobius thermophilus (strain ATCC BAA-1301 / DSM 18059 / JW/NM-WN-LF), this protein is UPF0756 membrane protein Nther_1957.